The following is a 142-amino-acid chain: Ribosome-binding factor A (142 aa).

The interval 119-142 (EAKQKQHGVETDAEQGETKDEGDK) is disordered.

Belongs to the RbfA family. Monomer. Binds 30S ribosomal subunits, but not 50S ribosomal subunits or 70S ribosomes.

Its subcellular location is the cytoplasm. Its function is as follows. One of several proteins that assist in the late maturation steps of the functional core of the 30S ribosomal subunit. Associates with free 30S ribosomal subunits (but not with 30S subunits that are part of 70S ribosomes or polysomes). Required for efficient processing of 16S rRNA. May interact with the 5'-terminal helix region of 16S rRNA. This is Ribosome-binding factor A from Shewanella halifaxensis (strain HAW-EB4).